Reading from the N-terminus, the 859-residue chain is Cadherin-related family member 1 (859 aa).

An N-terminal signal peptide occupies residues 1 to 21 (MRRGPQVALVLGLLCIYLAQA). Residues 22–701 (NFAPHFFDNG…LIQTKDNPMK (680 aa)) lie on the Extracellular side of the membrane. Cadherin domains lie at 36–135 (NGNM…APRF), 136–247 (LQEP…APIF), 248–354 (VGTP…PPTF), 360–473 (PQNK…VPKF), 474–577 (TSHY…YPQF), and 569–691 (DVND…MAAF). N-linked (GlcNAc...) asparagine glycosylation is found at Asn58 and Asn89. 2 N-linked (GlcNAc...) asparagine glycosylation sites follow: Asn288 and Asn297. Residues 702-722 (AVGVLAGVMAIVVAITVLIST) traverse the membrane as a helical segment. Topologically, residues 723–859 (ATFWRNKKSN…KKSLGNKAYV (137 aa)) are cytoplasmic. Residues 789–859 (PPRAPALPPP…KKSLGNKAYV (71 aa)) are disordered. Pro residues predominate over residues 790-800 (PRAPALPPPPK). Residues 802 to 816 (ASSTVAQQTVPTVSG) show a composition bias toward polar residues. The segment covering 817-827 (SLTPQPSQQLP) has biased composition (low complexity).

In terms of assembly, interacts with PROM1. Undergoes proteolytic cleavage; produces a soluble 95 kDa N-terminal fragment and a 25 kDa cell-associated C-terminal fragment. As to expression, expressed in the retina. Strongly expressed by the mitral and tufted cells in the main and accessory olfactory bulbs. Also expressed in the septum and olfactory cortex. Weakly expressed in the triangular septal nucleus and piriform cortex.

It localises to the cell membrane. In terms of biological role, potential calcium-dependent cell-adhesion protein. May be required for the structural integrity of the outer segment (OS) of photoreceptor cells. In Rattus norvegicus (Rat), this protein is Cadherin-related family member 1 (Cdhr1).